The following is a 540-amino-acid chain: Cytochrome P450 monooxygenase prx8 (540 aa).

The helical transmembrane segment at 50–68 (ALGAAIALFACACAYALVA) threads the bilayer. N-linked (GlcNAc...) asparagine glycosylation occurs at Asn460. A heme-binding site is contributed by Cys483.

This sequence belongs to the cytochrome P450 family. Heme serves as cofactor.

It is found in the membrane. Its pathway is sesquiterpene biosynthesis. Functionally, cytochrome P450 monooxygenase; part of the gene cluster that mediates the biosynthesis of PR-toxin, a bicyclic sesquiterpene belonging to the eremophilane class and acting as a mycotoxin. The first step of the pathway is catalyzed by the aristolochene synthase which performs the cyclization of trans,trans-farnesyl diphosphate (FPP) to the bicyclic sesquiterpene aristolochene. Following the formation of aristolochene, the non-oxygenated aristolochene is converted to the trioxygenated intermediate eremofortin B, via 7-epi-neopetasone. This conversion appears to involve three enzymes, a hydroxysterol oxidase-like enzyme, the quinone-oxidase prx3 that forms the quinone-type-structure in the bicyclic nucleus of aristolochene with the C8-oxo group and the C-3 hydroxyl group, and the P450 monooxygenase prx9 that introduces the epoxide at the double bond between carbons 1 and 2. No monoxy or dioxy-intermediates have been reported to be released to the broth, so these three early oxidative reactions may be coupled together. Eremofortin B is further oxidized by another P450 monooxygenase, that introduces a second epoxide between carbons 7 and 11 prior to acetylation to eremofortin A by the acetyltransferase prx11. The second epoxidation may be performed by a second P450 monooxygenase. After the acetylation step, eremofortin A is converted to eremofortin C and then to PR-toxin. First the conversion of eremofortin A to eremofortin C proceeds by oxidation of the side chain of the molecule at C-12 and is catalyzed by the short-chain oxidoreductase prx1. The cytochrome P450 monooxygenase prx8 also plays a role in this step. The primary alcohol formed at C-12 is finally oxidized by the short-chain alcohol dehydrogenase prx4 that forms PR-toxin. The protein is Cytochrome P450 monooxygenase prx8 of Penicillium rubens (strain ATCC 28089 / DSM 1075 / NRRL 1951 / Wisconsin 54-1255) (Penicillium chrysogenum).